The primary structure comprises 104 residues: Synaptic plasticity regulator PANTS (104 aa).

A disordered region spans residues 58–104 (RRSAEAQADSLPPGPEGEPRVAGAGPNAVTGILTRNQGTERPHGDTR). Positions 95–104 (GTERPHGDTR) are enriched in basic and acidic residues.

Belongs to the UPF0545 family. As to quaternary structure, interacts with RTN4 isoform A/Nogo-A; the interaction results in enhanced RTN4-mediated inhibition of AMPA receptor clustering. Also interacts with NCAM1, RANBP2 and CCT8. In terms of processing, rapidly degraded by proteolysis following neuronal stimulation, resulting in increased AMPA receptor clustering.

The protein localises to the synapse. It localises to the synaptic cleft. Negatively regulates long-term potentiation and modulates adult synaptic plasticity. Stabilizes the interaction of RTN4 isoform A/Nogo-A with its receptors, inhibiting clustering of postsynaptic AMPA receptors at synaptic sites. Upon neuronal stimulation, degraded at synapses, reducing RTN4 signaling and allowing AMPA receptor clustering at individual synapses. This Bos taurus (Bovine) protein is Synaptic plasticity regulator PANTS.